The chain runs to 426 residues: Glucose-1-phosphate adenylyltransferase (426 aa).

Alpha-D-glucose 1-phosphate is bound by residues glycine 165, 180–181 (EK), and serine 191.

The protein belongs to the bacterial/plant glucose-1-phosphate adenylyltransferase family. Homotetramer.

The enzyme catalyses alpha-D-glucose 1-phosphate + ATP + H(+) = ADP-alpha-D-glucose + diphosphate. It functions in the pathway glycan biosynthesis; glycogen biosynthesis. Its function is as follows. Involved in the biosynthesis of ADP-glucose, a building block required for the elongation reactions to produce glycogen. Catalyzes the reaction between ATP and alpha-D-glucose 1-phosphate (G1P) to produce pyrophosphate and ADP-Glc. This is Glucose-1-phosphate adenylyltransferase from Ruminiclostridium cellulolyticum (strain ATCC 35319 / DSM 5812 / JCM 6584 / H10) (Clostridium cellulolyticum).